The following is a 735-amino-acid chain: Phosphoribosylformylglycinamidine synthase subunit PurL (735 aa).

His-49 is an active-site residue. Residues Tyr-52 and Lys-91 each contribute to the ATP site. Glu-93 is a Mg(2+) binding site. Substrate contacts are provided by residues 94-97 (SHNH) and Arg-116. His-95 functions as the Proton acceptor in the catalytic mechanism. Asp-117 contributes to the Mg(2+) binding site. Gln-240 contacts substrate. Residue Asp-268 coordinates Mg(2+). 312–314 (ESQ) contributes to the substrate binding site. The ATP site is built by Asp-493 and Gly-530. Asn-531 serves as a coordination point for Mg(2+). Ser-533 is a substrate binding site.

Belongs to the FGAMS family. As to quaternary structure, monomer. Part of the FGAM synthase complex composed of 1 PurL, 1 PurQ and 2 PurS subunits.

It is found in the cytoplasm. The catalysed reaction is N(2)-formyl-N(1)-(5-phospho-beta-D-ribosyl)glycinamide + L-glutamine + ATP + H2O = 2-formamido-N(1)-(5-O-phospho-beta-D-ribosyl)acetamidine + L-glutamate + ADP + phosphate + H(+). It participates in purine metabolism; IMP biosynthesis via de novo pathway; 5-amino-1-(5-phospho-D-ribosyl)imidazole from N(2)-formyl-N(1)-(5-phospho-D-ribosyl)glycinamide: step 1/2. In terms of biological role, part of the phosphoribosylformylglycinamidine synthase complex involved in the purines biosynthetic pathway. Catalyzes the ATP-dependent conversion of formylglycinamide ribonucleotide (FGAR) and glutamine to yield formylglycinamidine ribonucleotide (FGAM) and glutamate. The FGAM synthase complex is composed of three subunits. PurQ produces an ammonia molecule by converting glutamine to glutamate. PurL transfers the ammonia molecule to FGAR to form FGAM in an ATP-dependent manner. PurS interacts with PurQ and PurL and is thought to assist in the transfer of the ammonia molecule from PurQ to PurL. The polypeptide is Phosphoribosylformylglycinamidine synthase subunit PurL (Methylocella silvestris (strain DSM 15510 / CIP 108128 / LMG 27833 / NCIMB 13906 / BL2)).